A 431-amino-acid polypeptide reads, in one-letter code: Glutamate-1-semialdehyde 2,1-aminomutase (431 aa).

Lys269 carries the post-translational modification N6-(pyridoxal phosphate)lysine.

The protein belongs to the class-III pyridoxal-phosphate-dependent aminotransferase family. HemL subfamily. Homodimer. Pyridoxal 5'-phosphate is required as a cofactor.

Its subcellular location is the cytoplasm. It catalyses the reaction (S)-4-amino-5-oxopentanoate = 5-aminolevulinate. It functions in the pathway porphyrin-containing compound metabolism; protoporphyrin-IX biosynthesis; 5-aminolevulinate from L-glutamyl-tRNA(Glu): step 2/2. Its pathway is porphyrin-containing compound metabolism; chlorophyll biosynthesis. The sequence is that of Glutamate-1-semialdehyde 2,1-aminomutase from Chlorobaculum parvum (strain DSM 263 / NCIMB 8327) (Chlorobium vibrioforme subsp. thiosulfatophilum).